Here is a 426-residue protein sequence, read N- to C-terminus: Histidine--tRNA ligase (426 aa).

The protein belongs to the class-II aminoacyl-tRNA synthetase family.

Its subcellular location is the cytoplasm. The enzyme catalyses tRNA(His) + L-histidine + ATP = L-histidyl-tRNA(His) + AMP + diphosphate + H(+). In Saccharolobus shibatae (strain ATCC 51178 / DSM 5389 / JCM 8931 / NBRC 15437 / B12) (Sulfolobus shibatae), this protein is Histidine--tRNA ligase.